Reading from the N-terminus, the 155-residue chain is Superoxide dismutase [Cu-Zn] (155 aa).

Positions 47, 49, and 64 each coordinate Cu cation. Cysteine 58 and cysteine 147 form a disulfide bridge. Residues histidine 64, histidine 72, histidine 81, and aspartate 84 each contribute to the Zn(2+) site. Histidine 121 contributes to the Cu cation binding site. Arginine 144 lines the substrate pocket.

It belongs to the Cu-Zn superoxide dismutase family. Homodimer. Requires Cu cation as cofactor. It depends on Zn(2+) as a cofactor.

The protein localises to the cytoplasm. It catalyses the reaction 2 superoxide + 2 H(+) = H2O2 + O2. Its function is as follows. Destroys radicals which are normally produced within the cells and which are toxic to biological systems. The sequence is that of Superoxide dismutase [Cu-Zn] (SOD1) from Kluyveromyces lactis (strain ATCC 8585 / CBS 2359 / DSM 70799 / NBRC 1267 / NRRL Y-1140 / WM37) (Yeast).